The primary structure comprises 236 residues: MSVHIGAKTGEIAERILLPGDPLRAKYIAETFLEGAVCYNEVRGMLGFTGTYKGERISVQGTGMGVPSISIYVNELIQSYGVKTLIRVGTCGAIQPDVRVRDVILAMSASTDSNMNRLIFRGRDYAPTADFHLLRTAYEVGVEKGLALKVGNVFTADMFYNDEPNWETWARYGVLAVEMETAALYTLAAKFGCRALSVLTVSDHILTGEETTAEERQMTFNEMIEVALEAAIRNGA.

His4 contacts a purine D-ribonucleoside. Phosphate is bound by residues Gly20, Arg24, Arg43, and Arg87–Thr90. A purine D-ribonucleoside contacts are provided by residues Glu178–Glu180 and Ser202–Asp203. Asp203 (proton donor) is an active-site residue.

This sequence belongs to the PNP/UDP phosphorylase family. Homohexamer; trimer of homodimers.

It carries out the reaction a purine D-ribonucleoside + phosphate = a purine nucleobase + alpha-D-ribose 1-phosphate. It catalyses the reaction a purine 2'-deoxy-D-ribonucleoside + phosphate = a purine nucleobase + 2-deoxy-alpha-D-ribose 1-phosphate. Functionally, catalyzes the reversible phosphorolytic breakdown of the N-glycosidic bond in the beta-(deoxy)ribonucleoside molecules, with the formation of the corresponding free purine bases and pentose-1-phosphate. This chain is Purine nucleoside phosphorylase DeoD-type, found in Geobacillus kaustophilus (strain HTA426).